A 271-amino-acid chain; its full sequence is Probable ribosomal RNA small subunit methyltransferase A (271 aa).

Residues L12, G37, E58, D83, and N100 each coordinate S-adenosyl-L-methionine.

It belongs to the class I-like SAM-binding methyltransferase superfamily. rRNA adenine N(6)-methyltransferase family. RsmA subfamily.

The protein resides in the cytoplasm. Specifically dimethylates two adjacent adenosines in the loop of a conserved hairpin near the 3'-end of 16S rRNA in the 30S particle. May play a critical role in biogenesis of 30S subunits. The protein is Probable ribosomal RNA small subunit methyltransferase A of Methanococcus aeolicus (strain ATCC BAA-1280 / DSM 17508 / OCM 812 / Nankai-3).